The sequence spans 337 residues: Methionyl-tRNA formyltransferase (337 aa).

(6S)-5,6,7,8-tetrahydrofolate is bound at residue 116–119 (SILP).

It belongs to the Fmt family.

It catalyses the reaction L-methionyl-tRNA(fMet) + (6R)-10-formyltetrahydrofolate = N-formyl-L-methionyl-tRNA(fMet) + (6S)-5,6,7,8-tetrahydrofolate + H(+). In terms of biological role, attaches a formyl group to the free amino group of methionyl-tRNA(fMet). The formyl group appears to play a dual role in the initiator identity of N-formylmethionyl-tRNA by promoting its recognition by IF2 and preventing the misappropriation of this tRNA by the elongation apparatus. In Desulfovibrio desulfuricans (strain ATCC 27774 / DSM 6949 / MB), this protein is Methionyl-tRNA formyltransferase.